The primary structure comprises 208 residues: Uridine kinase (208 aa).

ATP is bound at residue 11 to 18 (GGTGSGKS).

This sequence belongs to the uridine kinase family.

It is found in the cytoplasm. The catalysed reaction is uridine + ATP = UMP + ADP + H(+). The enzyme catalyses cytidine + ATP = CMP + ADP + H(+). It functions in the pathway pyrimidine metabolism; CTP biosynthesis via salvage pathway; CTP from cytidine: step 1/3. It participates in pyrimidine metabolism; UMP biosynthesis via salvage pathway; UMP from uridine: step 1/1. This chain is Uridine kinase, found in Alkaliphilus metalliredigens (strain QYMF).